A 135-amino-acid polypeptide reads, in one-letter code: ATP synthase epsilon chain (135 aa).

It belongs to the ATPase epsilon chain family. In terms of assembly, F-type ATPases have 2 components, CF(1) - the catalytic core - and CF(0) - the membrane proton channel. CF(1) has five subunits: alpha(3), beta(3), gamma(1), delta(1), epsilon(1). CF(0) has three main subunits: a, b and c.

The protein localises to the cell inner membrane. Produces ATP from ADP in the presence of a proton gradient across the membrane. The sequence is that of ATP synthase epsilon chain from Brucella anthropi (strain ATCC 49188 / DSM 6882 / CCUG 24695 / JCM 21032 / LMG 3331 / NBRC 15819 / NCTC 12168 / Alc 37) (Ochrobactrum anthropi).